Here is a 174-residue protein sequence, read N- to C-terminus: Large ribosomal subunit protein uL18 (174 aa).

The protein belongs to the universal ribosomal protein uL18 family. Part of the 50S ribosomal subunit. Contacts the 5S and 23S rRNAs.

Functionally, this is one of the proteins that bind and probably mediate the attachment of the 5S RNA into the large ribosomal subunit, where it forms part of the central protuberance. The protein is Large ribosomal subunit protein uL18 of Methanocorpusculum labreanum (strain ATCC 43576 / DSM 4855 / Z).